The sequence spans 753 residues: Striatin-4 (753 aa).

Residues 10 to 65 (VAAAASSCRPLGSGAGPGPTGAAPVSAPAPGPGPAGKGGGGGGSPGPTAGPEPLSL) are disordered. Residues 43-54 (PAGKGGGGGGSP) show a composition bias toward gly residues. Serine 53 is subject to Phosphoserine. Positions 69–136 (LHFIQHEWAR…QERAKYHKLK (68 aa)) form a coiled coil. Residues 71 to 79 (FIQHEWARF) are caveolin-binding. A calmodulin-binding region spans residues 165–182 (ENSPLVWKEGRQLLRQYL). Residue serine 206 is modified to Phosphoserine. 3 disordered regions span residues 213–232 (VEPS…LSGG), 271–345 (CEDE…SPHE), and 363–382 (VDGL…QPRP). Acidic residues-rich tracts occupy residues 271–283 (CEDE…DELD) and 302–317 (EMED…DAIN). Residue serine 276 is modified to Phosphoserine. Residues 332–345 (PDPRRCTVDGSPHE) show a composition bias toward basic and acidic residues. Residues 370–380 (VTGPPPGTPQP) show a composition bias toward pro residues. WD repeat units lie at residues 436 to 475 (SHYD…TAKK), 489 to 528 (AHRG…MDPY), 542 to 581 (GHGD…PACL), 587 to 628 (ASEH…ALLT), 635 to 674 (SGPT…PVHS), 677 to 716 (AHLD…CVQE), and 723 to 753 (KHEE…KVFV).

This sequence belongs to the WD repeat striatin family. Part of the core of STRIPAK complexes composed of PP2A catalytic and scaffolding subunits, the striatins (PP2A regulatory subunits), the striatin-associated proteins MOB4, STRIP1 and STRIP2, PDCD10 and members of the STE20 kinases, such as STK24 and STK26. Interacts with CTTNBP2NL.

Its subcellular location is the cytoplasm. Calmodulin-binding scaffolding protein which is the center of the striatin-interacting phosphatase and kinase (STRIPAK) complexes. STRIPAK complexes have critical roles in protein (de)phosphorylation and are regulators of multiple signaling pathways including Hippo, MAPK, nuclear receptor and cytoskeleton remodeling. Different types of STRIPAK complexes are involved in a variety of biological processes such as cell growth, differentiation, apoptosis, metabolism and immune regulation. Key regulator of the expanded Hippo signaling pathway by interacting and allowing the inhibition of MAP4K kinases by the STRIPAK complex. The protein is Striatin-4 of Homo sapiens (Human).